The sequence spans 102 residues: Putative septation protein SpoVG (102 aa).

The interval 83–102 is disordered; the sequence is TDEVIPDKNATSDNEESDEA.

The protein belongs to the SpoVG family.

Its function is as follows. Could be involved in septation. The chain is Putative septation protein SpoVG from Staphylococcus epidermidis (strain ATCC 35984 / DSM 28319 / BCRC 17069 / CCUG 31568 / BM 3577 / RP62A).